The primary structure comprises 524 residues: Probable cytosol aminopeptidase (524 aa).

Residues Lys288 and Asp293 each coordinate Mn(2+). Residue Lys300 is part of the active site. Positions 311, 370, and 372 each coordinate Mn(2+). Residue Arg374 is part of the active site.

The protein belongs to the peptidase M17 family. It depends on Mn(2+) as a cofactor.

It is found in the cytoplasm. It catalyses the reaction Release of an N-terminal amino acid, Xaa-|-Yaa-, in which Xaa is preferably Leu, but may be other amino acids including Pro although not Arg or Lys, and Yaa may be Pro. Amino acid amides and methyl esters are also readily hydrolyzed, but rates on arylamides are exceedingly low.. The catalysed reaction is Release of an N-terminal amino acid, preferentially leucine, but not glutamic or aspartic acids.. Functionally, presumably involved in the processing and regular turnover of intracellular proteins. Catalyzes the removal of unsubstituted N-terminal amino acids from various peptides. In Mycobacterium leprae (strain TN), this protein is Probable cytosol aminopeptidase (pepA).